A 1052-amino-acid chain; its full sequence is uncharacterized protein (1052 aa).

The region spanning 389–561 is the Helicase ATP-binding domain; sequence WINKGKTFAI…NKGGNYIMIN (173 aa). Residue 400–407 participates in ATP binding; sequence SAMGTGKT.

This sequence belongs to the mimivirus R1 family.

This is an uncharacterized protein from Acanthamoeba polyphaga mimivirus (APMV).